We begin with the raw amino-acid sequence, 313 residues long: MTKGSKYTIDPISVKTACTSEESYIRCVEYGKGKAHYPNLSLLAKAILAGVFVGVCAHASGIAGGHFYYHKLREHVGISMSAFVYGFTFPIAFLCIIATGSDLFTGNTLAVTTALLQRKVTLLEYLRVMSISLFGNYVGAVSFAFFVSHLSGAFKKHEEIGKNHIFQFLNDIAEKKVSHTFVQCVCLAIGCNIFVCLAVYFVLTIKDGSGMVFSVFFAVYAFAIAGYEHIIANMYTLNLALMIEANVDWTKVYVDNLLPTLIGNYIAGAIVLACPLFYIYRHSYSDYEKTRGDGGNSGLKSLSIEMQNGSSGR.

Topologically, residues Met-1–Ala-46 are cytoplasmic. The helical transmembrane segment at Ile-47–Phe-67 threads the bilayer. The Extracellular segment spans residues Tyr-68 to Gly-77. Residues Ile-78–Ala-98 form a helical membrane-spanning segment. At Thr-99–Arg-127 the chain is on the cytoplasmic side. Residues Val-128 to Ser-148 traverse the membrane as a helical segment. Residues His-149–Cys-184 are Extracellular-facing. A helical transmembrane segment spans residues Val-185 to Ile-205. The Cytoplasmic portion of the chain corresponds to Lys-206–Gly-210. A helical transmembrane segment spans residues Met-211–Ile-231. The Extracellular segment spans residues Ala-232 to Asn-256. Residues Leu-257–Phe-277 traverse the membrane as a helical segment. The Cytoplasmic segment spans residues Tyr-278–Arg-313. The tract at residues Thr-290 to Arg-313 is disordered. A compositionally biased stretch (polar residues) spans Gly-298 to Arg-313.

It belongs to the FNT transporter (TC 1.A.16) family. Homopentamer.

It localises to the cell membrane. Its subcellular location is the vacuole membrane. It carries out the reaction (S)-lactate(in) + H(+)(in) = (S)-lactate(out) + H(+)(out). The catalysed reaction is formate(in) + H(+)(in) = formate(out) + H(+)(out). The enzyme catalyses pyruvate(out) + H(+)(out) = pyruvate(in) + H(+)(in). It catalyses the reaction acetate(out) + H(+)(out) = acetate(in) + H(+)(in). Its activity is regulated as follows. Inhibited by the Malaria Box compound MMV007839 and its derivatives BH296 and BH267.meta. Functionally, monocarboxylate-proton symporter that mediates the efflux of the waste product lactate in the intraerythrocytic parasites; active in acidic-to-neutral pH range. Transports L-lactate. The polypeptide is Formate-nitrite transporter (Plasmodium vivax).